Consider the following 239-residue polypeptide: Ubiquinone biosynthesis O-methyltransferase (239 aa).

S-adenosyl-L-methionine contacts are provided by arginine 42, glycine 62, aspartate 83, and methionine 127.

Belongs to the methyltransferase superfamily. UbiG/COQ3 family.

The catalysed reaction is a 3-demethylubiquinol + S-adenosyl-L-methionine = a ubiquinol + S-adenosyl-L-homocysteine + H(+). It carries out the reaction a 3-(all-trans-polyprenyl)benzene-1,2-diol + S-adenosyl-L-methionine = a 2-methoxy-6-(all-trans-polyprenyl)phenol + S-adenosyl-L-homocysteine + H(+). It functions in the pathway cofactor biosynthesis; ubiquinone biosynthesis. O-methyltransferase that catalyzes the 2 O-methylation steps in the ubiquinone biosynthetic pathway. In Pectobacterium carotovorum subsp. carotovorum (strain PC1), this protein is Ubiquinone biosynthesis O-methyltransferase.